The chain runs to 156 residues: Snaclec 2 (156 aa).

The N-terminal stretch at 1 to 21 (MGRFIFLSSGLLVVFLSLSGA) is a signal peptide. 3 cysteine pairs are disulfide-bonded: cysteine 25–cysteine 36, cysteine 53–cysteine 150, and cysteine 125–cysteine 142. Residues 32-151 (FDQHCYRAFD…CGDDYPFVCK (120 aa)) form the C-type lectin domain.

Belongs to the snaclec family. As to quaternary structure, heterodimer; disulfide-linked. In terms of tissue distribution, expressed by the venom gland.

The protein resides in the secreted. In terms of biological role, interferes with one step of hemostasis (modulation of platelet aggregation, or coagulation cascade, for example). This is Snaclec 2 from Bitis gabonica (Gaboon adder).